Reading from the N-terminus, the 315-residue chain is Ribosome biogenesis protein BRX1 homolog 1 (315 aa).

The tract at residues 1–35 (MGRKRKHSETVTAAPVKDSAPERPQRTLLGWKDKK) is disordered. The segment covering 19 to 35 (SAPERPQRTLLGWKDKK) has biased composition (basic and acidic residues). The Brix domain maps to 53–256 (EKVLVTCSRR…PIKIFGGSFG (204 aa)).

The protein belongs to the BRX1 family. In terms of tissue distribution, expressed in roots, rosette leaves, stems, flowers, siliques and seeds.

The protein resides in the nucleus. Its subcellular location is the nucleolus. In terms of biological role, involved in pre-rRNA processing and required for biogenesis of the large (60S) ribosomal subunit. Required for proper development. The protein is Ribosome biogenesis protein BRX1 homolog 1 of Arabidopsis thaliana (Mouse-ear cress).